The chain runs to 365 residues: Transmembrane protein 25 (365 aa).

The signal sequence occupies residues Met1–Gly26. At Glu27–Glu232 the chain is on the extracellular side. The Ig-like domain maps to Pro30–Ile123. Cys52 and Cys107 are oxidised to a cystine. Residues Asn106, Asn162, Asn192, and Asn205 are each glycosylated (N-linked (GlcNAc...) asparagine). A helical membrane pass occupies residues Val233–Ser253. Residues Thr254–Leu365 lie on the Cytoplasmic side of the membrane.

Interacts with GRIN2B. As to expression, expressed throughout the brain with higher levels within the hippocampus.

It is found in the late endosome. It localises to the lysosome. Its subcellular location is the cell membrane. The protein resides in the secreted. Functionally, in neurons, modulates the degradation of NMDA receptor GRIN2B subunit. Plays a role in the regulation of neuronal excitability. The chain is Transmembrane protein 25 from Mus musculus (Mouse).